The sequence spans 999 residues: Sarcoplasmic/endoplasmic reticulum calcium ATPase 3 (999 aa).

An N-acetylmethionine modification is found at Met-1. Over Met-1 to Ser-48 the chain is Cytoplasmic. A Phosphoserine modification is found at Ser-17. Position 19 is a phosphothreonine (Thr-19). At Ser-25 the chain carries Phosphoserine. Residues Leu-49–Ala-69 form a helical membrane-spanning segment. At Leu-70–Val-89 the chain is on the extracellular side. A helical transmembrane segment spans residues Glu-90–Arg-110. The Cytoplasmic segment spans residues Asn-111 to Leu-253. Residues Asp-254 to Val-273 form a helical membrane-spanning segment. Topologically, residues Ile-274–Tyr-295 are extracellular. Residues Phe-296–Ala-313 form a helical membrane-spanning segment. Residues Val-304, Ala-305, Ile-307, and Glu-309 each coordinate Ca(2+). Residues Val-314–Met-757 lie on the Cytoplasmic side of the membrane. Asp-351 (4-aspartylphosphate intermediate) is an active-site residue. 2 residues coordinate Mg(2+): Asp-351 and Thr-353. ATP is bound at residue Thr-353. The segment at Ala-370 to Gln-400 is interaction with phospholamban 1. The residue at position 415 (Thr-415) is a Phosphothreonine. ATP contacts are provided by Glu-442, Arg-489, Lys-515, Arg-560, Thr-625, Gly-626, and Asp-627. Residue Ser-662 is modified to Phosphoserine. ATP-binding residues include Arg-678 and Lys-684. Asp-703 lines the Mg(2+) pocket. Residue Asn-706 participates in ATP binding. The helical transmembrane segment at Lys-758–Leu-777 threads the bilayer. 2 residues coordinate Ca(2+): Asn-768 and Glu-771. Residues Thr-778–Leu-787 are Extracellular-facing. Residues Ile-788–Gly-808 traverse the membrane as a helical segment. The tract at residues Ile-788–Gly-808 is interaction with phospholamban 2. Residues Asn-796, Thr-799, and Asp-800 each contribute to the Ca(2+) site. At Phe-809–Leu-828 the chain is on the cytoplasmic side. A helical membrane pass occupies residues Ile-829–Ala-851. The Extracellular portion of the chain corresponds to Ala-852–Thr-897. Cys-876 and Cys-888 are disulfide-bonded. Residues Thr-898–Ser-917 traverse the membrane as a helical segment. Glu-908 serves as a coordination point for Ca(2+). The Cytoplasmic segment spans residues Glu-918–Asn-930. A helical transmembrane segment spans residues Pro-931–Leu-949. Over Val-950–Gly-964 the chain is Extracellular. The helical transmembrane segment at Arg-965–Lys-985 threads the bilayer. Residues Tyr-986 to Gln-999 lie on the Cytoplasmic side of the membrane.

It belongs to the cation transport ATPase (P-type) (TC 3.A.3) family. Type IIA subfamily. As to quaternary structure, interacts with sarcolipin (SLN). Interacts with phospholamban (PLN). Interacts with myoregulin (MRLN). Interacts with DWORF. Interacts with VMP1. Interacts with TUNAR; the interaction occurs at low levels in low glucose conditions and is increased by high glucose levels. The cofactor is Mg(2+). Expressed in endothelial tissues.

The protein localises to the endoplasmic reticulum membrane. Its subcellular location is the sarcoplasmic reticulum membrane. It catalyses the reaction Ca(2+)(in) + ATP + H2O = Ca(2+)(out) + ADP + phosphate + H(+). Its activity is regulated as follows. Inhibited by sarcolipin (SLN), phospholamban (PLN) and myoregulin (MRLN). Enhanced by DWORF; DWORF increases activity by displacing sarcolipin (SLN), phospholamban (PLN) and myoregulin (MRLN). In terms of biological role, this magnesium-dependent enzyme catalyzes the hydrolysis of ATP coupled with the transport of calcium. Transports calcium ions from the cytosol into the sarcoplasmic/endoplasmic reticulum lumen. Contributes to calcium sequestration involved in muscular excitation/contraction. This chain is Sarcoplasmic/endoplasmic reticulum calcium ATPase 3 (ATP2A3), found in Sus scrofa (Pig).